We begin with the raw amino-acid sequence, 341 residues long: Glucokinase (341 aa).

18-23 (GDIGGT) contributes to the ATP binding site.

This sequence belongs to the bacterial glucokinase family.

It is found in the cytoplasm. The enzyme catalyses D-glucose + ATP = D-glucose 6-phosphate + ADP + H(+). The protein is Glucokinase of Rhizobium etli (strain ATCC 51251 / DSM 11541 / JCM 21823 / NBRC 15573 / CFN 42).